Here is a 341-residue protein sequence, read N- to C-terminus: NADH-quinone oxidoreductase subunit H 2 (341 aa).

The next 8 membrane-spanning stretches (helical) occupy residues 13-33, 82-102, 115-135, 161-181, 190-210, 242-262, 277-297, and 317-337; these read IVVIGQSVLLIVVLLISIAYI, GVFLLAPLVTCVLALSAWAVI, VGVLYILAVSSLSVYGIIMAG, IGFVIICVLLCVGSLNLTAIV, VLGWYWLPLFPMFVVFYVSAL, LFVLGEYVAIVTMCAMGTILF, WVPGIVWFALKVLFMFFMFAM, and VFLPLSLAMVVIVAAVLQFAG.

It belongs to the complex I subunit 1 family. In terms of assembly, NDH-1 is composed of 14 different subunits. Subunits NuoA, H, J, K, L, M, N constitute the membrane sector of the complex.

It localises to the cell inner membrane. The catalysed reaction is a quinone + NADH + 5 H(+)(in) = a quinol + NAD(+) + 4 H(+)(out). Its function is as follows. NDH-1 shuttles electrons from NADH, via FMN and iron-sulfur (Fe-S) centers, to quinones in the respiratory chain. The immediate electron acceptor for the enzyme in this species is believed to be ubiquinone. Couples the redox reaction to proton translocation (for every two electrons transferred, four hydrogen ions are translocated across the cytoplasmic membrane), and thus conserves the redox energy in a proton gradient. This subunit may bind ubiquinone. This Rhodopseudomonas palustris (strain HaA2) protein is NADH-quinone oxidoreductase subunit H 2.